The following is a 248-amino-acid chain: Triosephosphate isomerase A (248 aa).

Residues Asn-11 and Lys-13 each coordinate substrate. The active-site Electrophile is the His-95. The Proton acceptor role is filled by Glu-165.

Belongs to the triosephosphate isomerase family. Homodimer.

The protein localises to the cytoplasm. The enzyme catalyses dihydroxyacetone phosphate = methylglyoxal + phosphate. It carries out the reaction D-glyceraldehyde 3-phosphate = dihydroxyacetone phosphate. It functions in the pathway carbohydrate degradation; glycolysis; D-glyceraldehyde 3-phosphate from glycerone phosphate: step 1/1. Its pathway is carbohydrate biosynthesis; gluconeogenesis. Functionally, triosephosphate isomerase is an extremely efficient metabolic enzyme that catalyzes the interconversion between dihydroxyacetone phosphate (DHAP) and D-glyceraldehyde-3-phosphate (G3P) in glycolysis and gluconeogenesis. In terms of biological role, it is also responsible for the non-negligible production of methylglyoxal a reactive cytotoxic side-product that modifies and can alter proteins, DNA and lipids. This Danio rerio (Zebrafish) protein is Triosephosphate isomerase A (tpi1a).